Here is a 520-residue protein sequence, read N- to C-terminus: Ribonuclease Y (520 aa).

The helical transmembrane segment at 5 to 25 threads the bilayer; it reads ITIISSLLFLIVGLVVGSLIF. The disordered stretch occupies residues 76-127; it reads ELRGRRTETQKAENRLLQREENLDRKDTSLSKREATLERKEESISKRQQQIE. Residues 210 to 273 enclose the KH domain; the sequence is TVSVVTLPND…EIARIALEKL (64 aa). Positions 336–429 constitute an HD domain; it reads VLNHSLEVSK…VAAADALSAA (94 aa).

This sequence belongs to the RNase Y family.

The protein resides in the cell membrane. Functionally, endoribonuclease that initiates mRNA decay. The sequence is that of Ribonuclease Y from Listeria monocytogenes serotype 1/2a (strain 10403S).